The sequence spans 313 residues: uncharacterized protein (313 aa).

This is an uncharacterized protein from Bacillus subtilis (strain 168).